We begin with the raw amino-acid sequence, 1217 residues long: ATP-dependent RNA helicase DHX30 (1217 aa).

Phosphoserine occurs at positions 15 and 29. Residues 76–144 enclose the DRBM domain; that stretch reads PKNLLNSVIG…QAAAAACQLF (69 aa). Residues 176 to 223 are disordered; it reads WWRPEPTMPPTSWRQLNPENIRPGGPAGLSRSLGREEEEDEEEELEEG. Residues 211–223 show a composition bias toward acidic residues; sequence EEEEDEEEELEEG. A phosphoserine mark is found at Ser-249 and Ser-403. The 169-residue stretch at 467-635 folds into the Helicase ATP-binding domain; sequence LSAIEQHPVV…FGGCPVIKVP (169 aa). Residue 480–487 coordinates ATP; that stretch reads GDTGCGKT. The DEAH box motif lies at 582–585; sequence DEVH. The 174-residue stretch at 677–850 folds into the Helicase C-terminal domain; the sequence is LVTDLVLHID…NLVLQAKIHM (174 aa).

This sequence belongs to the DEAD box helicase family. DEAH subfamily. As to quaternary structure, identified in a complex with TFAM and SSBP1. Interacts (via N-terminus) with ZC3HAV1 (via N-terminal domain) in an RNA-independent manner. Found in a complex with GRSF1, DDX28, FASTKD2 and FASTKD5. In terms of processing, phosphorylated on Ser-15. Expressed in the heart, brain, spleen, lung, liver, skeletal muscle, kidney, and testis. Expression is strongest in the testis and brain, while the lowest levels of expression are found in the spleen and lung.

Its subcellular location is the cytoplasm. The protein localises to the mitochondrion. It localises to the mitochondrion matrix. The protein resides in the mitochondrion nucleoid. The enzyme catalyses ATP + H2O = ADP + phosphate + H(+). In terms of biological role, RNA-dependent helicase. Plays an important role in the assembly of the mitochondrial large ribosomal subunit. Required for optimal function of the zinc-finger antiviral protein ZC3HAV1. Associates with mitochondrial DNA. Involved in nervous system development and differentiation through its involvement in the up-regulation of a number of genes which are required for neurogenesis, including GSC, NCAM1, neurogenin, and NEUROD. The protein is ATP-dependent RNA helicase DHX30 (Dhx30) of Mus musculus (Mouse).